We begin with the raw amino-acid sequence, 317 residues long: tRNA dimethylallyltransferase (317 aa).

Gly-14–Thr-21 provides a ligand contact to ATP. Residue Thr-16–Thr-21 coordinates substrate. Interaction with substrate tRNA regions lie at residues Asp-39 to Leu-42 and Gln-163 to Arg-167.

This sequence belongs to the IPP transferase family. Monomer. The cofactor is Mg(2+).

The catalysed reaction is adenosine(37) in tRNA + dimethylallyl diphosphate = N(6)-dimethylallyladenosine(37) in tRNA + diphosphate. Functionally, catalyzes the transfer of a dimethylallyl group onto the adenine at position 37 in tRNAs that read codons beginning with uridine, leading to the formation of N6-(dimethylallyl)adenosine (i(6)A). This is tRNA dimethylallyltransferase from Stenotrophomonas maltophilia (strain R551-3).